We begin with the raw amino-acid sequence, 786 residues long: Mitochondrial intermediate peptidase (786 aa).

The N-terminal 29 residues, 1–29 (MSSILLRSYRHHAKVWTRPSSKSSFIRSL), are a transit peptide targeting the mitochondrion. His567 provides a ligand contact to Zn(2+). Residue Glu568 is part of the active site. Residues His571 and His574 each coordinate Zn(2+).

The protein belongs to the peptidase M3 family. The cofactor is Zn(2+).

The protein localises to the mitochondrion matrix. It carries out the reaction Release of an N-terminal octapeptide as second stage of processing of some proteins imported into the mitochondrion.. In terms of biological role, cleaves proteins, imported into the mitochondrion, to their mature size. While most mitochondrial precursor proteins are processed to the mature form in one step by mitochondrial processing peptidase (MPP), the sequential cleavage by MIP of an octapeptide after initial processing by MPP is a required step for a subgroup of nuclear-encoded precursor proteins destined for the matrix or the inner membrane. In Meyerozyma guilliermondii (strain ATCC 6260 / CBS 566 / DSM 6381 / JCM 1539 / NBRC 10279 / NRRL Y-324) (Yeast), this protein is Mitochondrial intermediate peptidase (OCT1).